The primary structure comprises 525 residues: Coronin-2A (525 aa).

WD repeat units lie at residues 24 to 71 (NCYD…TGKL), 72 to 122 (DPHY…RNLT), 123 to 170 (AYRK…SVIT), 171 to 214 (SPMS…AGTV), 215 to 259 (LQEA…DNLS), 260 to 305 (VPLM…ADKP), and 306 to 342 (HLSYLTEYRSYNPQKGIGVMPKRGLDVSSCEIFRFYK). Positions 485-524 (QMFYRQQEEIRRLRELLTQREVQAKQLELEIKNLRMGSEQ) form a coiled coil.

The protein belongs to the WD repeat coronin family. In terms of assembly, binds actin. Component of the N-Cor repressor complex, at least composed of NCOR1, NCOR2, HDAC3, TBL1X, TBL1R, CORO2A and GPS2.

This Homo sapiens (Human) protein is Coronin-2A (CORO2A).